Reading from the N-terminus, the 356-residue chain is Galactosylgalactosylxylosylprotein 3-beta-glucuronosyltransferase sqv-8 (356 aa).

Over Met1–Lys9 the chain is Cytoplasmic. The chain crosses the membrane as a helical; Signal-anchor for type II membrane protein span at residues Trp10–Ile30. At Asn31 to Asn356 the chain is on the lumenal side. N-linked (GlcNAc...) asparagine glycans are attached at residues Asn93 and Asn173. Position 208 (Asp208) interacts with Mn(2+). 2 N-linked (GlcNAc...) asparagine glycosylation sites follow: Asn246 and Asn272. Glu294 functions as the Proton acceptor in the catalytic mechanism.

This sequence belongs to the glycosyltransferase 43 family.

The protein localises to the membrane. The catalysed reaction is 3-O-(beta-D-galactosyl-(1-&gt;3)-beta-D-galactosyl-(1-&gt;4)-beta-D-xylosyl)-L-seryl-[protein] + UDP-alpha-D-glucuronate = 3-O-(beta-D-GlcA-(1-&gt;3)-beta-D-Gal-(1-&gt;3)-beta-D-Gal-(1-&gt;4)-beta-D-Xyl)-L-seryl-[protein] + UDP + H(+). Glycosyltransferase required for the biosynthesis of the tetrasaccharide (GlcA-Gal-Gal-Xyl-)Ser core linker of heparan sulfate and chondroitin sulfate. May be involved in the biosynthesis of the HNK-1 carbohydrate epitope on glycoproteins. Required for embryonic development. Involved in the elongation of the pharyngeal isthmus during the later stages of embryonic development. Involved in vulval epithelium invagination. The polypeptide is Galactosylgalactosylxylosylprotein 3-beta-glucuronosyltransferase sqv-8 (sqv-8) (Caenorhabditis elegans).